A 185-amino-acid chain; its full sequence is Ribosome-recycling factor (185 aa).

Residues 142 to 161 (LVKDGEAGEDEGARAEKELD) are disordered.

The protein belongs to the RRF family.

The protein resides in the cytoplasm. Its function is as follows. Responsible for the release of ribosomes from messenger RNA at the termination of protein biosynthesis. May increase the efficiency of translation by recycling ribosomes from one round of translation to another. This chain is Ribosome-recycling factor, found in Paenarthrobacter aurescens (strain TC1).